A 242-amino-acid polypeptide reads, in one-letter code: tRNA pseudouridine synthase A (242 aa).

The active-site Nucleophile is the Asp51. Tyr107 lines the substrate pocket.

Belongs to the tRNA pseudouridine synthase TruA family. As to quaternary structure, homodimer.

The catalysed reaction is uridine(38/39/40) in tRNA = pseudouridine(38/39/40) in tRNA. Formation of pseudouridine at positions 38, 39 and 40 in the anticodon stem and loop of transfer RNAs. The protein is tRNA pseudouridine synthase A of Helicobacter pylori (strain HPAG1).